Consider the following 424-residue polypeptide: Protein ImpB (424 aa).

Residues 2-189 (FALADINSFY…QPVGEVWGVG (188 aa)) form the UmuC domain.

The protein belongs to the DNA polymerase type-Y family.

Involved in UV protection and mutation. This chain is Protein ImpB (impB), found in Salmonella typhimurium.